The sequence spans 92 residues: Large ribosomal subunit protein eL31 (92 aa).

It belongs to the eukaryotic ribosomal protein eL31 family.

This is Large ribosomal subunit protein eL31 from Halorubrum lacusprofundi (strain ATCC 49239 / DSM 5036 / JCM 8891 / ACAM 34).